Reading from the N-terminus, the 1841-residue chain is Sucrase-isomaltase, intestinal (1841 aa).

At 1–12 the chain is on the cytoplasmic side; it reads MAKKKFSALEIS. Ser7 is subject to Phosphoserine; by PKA. Residues 13–32 form a helical; Signal-anchor for type II membrane protein membrane-spanning segment; that stretch reads LIVLFIIVTAIAIALVTVLA. Residues 33 to 1841 are Lumenal-facing; it reads TKVPAVEEIK…LDEPIQITWS (1809 aa). The interval 42–81 is disordered; the sequence is KSPTPTSNSTPTSTPTSTSTPTSTSTPSPGKCPPEQGEPI. Residues 43–70 show a composition bias toward low complexity; it reads SPTPTSNSTPTSTPTSTSTPTSTSTPSP. In terms of domain architecture, P-type 1 spans 71 to 120; sequence GKCPPEQGEPINERINCIPEQHPTKAICEERGCCWRPWNNTVIPWCFFAD. Disulfide bonds link Cys73–Cys104, Cys87–Cys103, and Cys98–Cys116. N-linked (GlcNAc...) asparagine glycosylation occurs at Asn109. Positions 120 to 1013 are isomaltase; sequence DNHGYNAESI…ELQLNPPNAR (894 aa). The substrate site is built by Asp274 and Asp398. Sulfotyrosine is present on residues Tyr401 and Tyr410. A glycan (N-linked (GlcNAc...) asparagine) is linked at Asn464. The Nucleophile; for isomaltase activity role is filled by Asp514. Arg599 contacts substrate. Asp615 (for isomaltase activity) is an active-site residue. Cysteines 646 and 657 form a disulfide. His673 is a binding site for substrate. Asn758, Asn765, Asn867, and Asn910 each carry an N-linked (GlcNAc...) asparagine glycan. Positions 936–984 constitute a P-type 2 domain; that stretch reads RWCRTFSDNEKFTCYPDVGTATEGTCTQRGCLWQPVSGLSNVPPYYFPP. Residues 1014 to 1841 are sucrase; sequence IKLPSNPIST…LDEPIQITWS (828 aa). N-linked (GlcNAc...) asparagine glycosylation is found at Asn1240, Asn1308, Asn1345, Asn1359, and Asn1373. Position 1387 is a sulfotyrosine (Tyr1387). Residue Asp1399 is the Nucleophile; for sucrase activity of the active site. Glu1402 acts as the For sucrase activity in catalysis. N-linked (GlcNAc...) asparagine glycosylation is present at Asn1485. Asp1512 serves as the catalytic Proton donor; for sucrase activity. Asn1513, Asn1575, Asn1762, and Asn1829 each carry an N-linked (GlcNAc...) asparagine glycan.

This sequence belongs to the glycosyl hydrolase 31 family. In terms of assembly, the resulting sucrase and isomaltase subunits stay associated with one another in a complex by non-covalent linkages. The precursor is proteolytically cleaved when exposed to pancreatic proteases in the intestinal lumen. Post-translationally, sulfated.

It localises to the apical cell membrane. It catalyses the reaction Hydrolysis of sucrose and maltose by an alpha-D-glucosidase-type action.. The enzyme catalyses Hydrolysis of (1-&gt;6)-alpha-D-glucosidic linkages in some oligosaccharides produced from starch and glycogen by alpha-amylase, and in isomaltose.. In terms of biological role, plays an important role in the final stage of carbohydrate digestion. Isomaltase activity is specific for both alpha-1,4- and alpha-1,6-oligosaccharides. This is Sucrase-isomaltase, intestinal (Si) from Rattus norvegicus (Rat).